We begin with the raw amino-acid sequence, 359 residues long: GTPase Obg (359 aa).

An Obg domain is found at 1 to 159 (MQFIDQAEIQ…RSLRLELKLL (159 aa)). The OBG-type G domain occupies 160 to 328 (AEVGIIGLPN…LLHQIWQELE (169 aa)). GTP is bound by residues 166–173 (GLPNAGKS), 191–195 (FTTLV), 213–216 (DIPG), 280–283 (NKID), and 309–311 (SAI). Residues S173 and T193 each contribute to the Mg(2+) site.

Belongs to the TRAFAC class OBG-HflX-like GTPase superfamily. OBG GTPase family. Monomer. Mg(2+) serves as cofactor.

The protein localises to the cytoplasm. Its function is as follows. An essential GTPase which binds GTP, GDP and possibly (p)ppGpp with moderate affinity, with high nucleotide exchange rates and a fairly low GTP hydrolysis rate. Plays a role in control of the cell cycle, stress response, ribosome biogenesis and in those bacteria that undergo differentiation, in morphogenesis control. The sequence is that of GTPase Obg from Cyanothece sp. (strain PCC 7425 / ATCC 29141).